We begin with the raw amino-acid sequence, 326 residues long: Protein MICROTUBULE BINDING PROTEIN 2C (326 aa).

Polar residues-rich tracts occupy residues 1 to 15 (MYEQQQHFMDLQSDS) and 34 to 46 (PHQSAAGTNSGNE). Disordered regions lie at residues 1–46 (MYEQ…SGNE) and 71–132 (ERSS…KALA). A coiled-coil region spans residues 132–183 (AGAEKEEMSRLREQVNDLQTKLSEKEEVLKSMEMSKNQVNEIQEKLEATNRL).

Belongs to the microtubule binding protein 2C family. As to quaternary structure, interacts with STM. As to expression, expressed in seedlings, roots, flowers and developing ovules.

Its subcellular location is the cytoplasm. The protein localises to the cytoskeleton. In terms of biological role, prevents homeodomain proteins (e.g. STM) association to plasmodesmata and, consequently, cell-to-cell transport. Binds to RNA. Alters STM RNA binding capacity. Regulates cytoskeleton (e.g. actin) organization that determinates cell shape. Regulates stomata patterning and drought tolerance. Involved in restricting tobamovirus (e.g. oilseed rape mosaic virus) infectivity, probably by interfering with cell-to-cell virus movement. The sequence is that of Protein MICROTUBULE BINDING PROTEIN 2C from Arabidopsis thaliana (Mouse-ear cress).